Consider the following 87-residue polypeptide: Small ribosomal subunit protein eS21 (87 aa).

This sequence belongs to the eukaryotic ribosomal protein eS21 family. As to quaternary structure, component of the small ribosomal subunit. Mature ribosomes consist of a small (40S) and a large (60S) subunit. The 40S subunit contains about 33 different proteins and 1 molecule of RNA (18S). The 60S subunit contains about 49 different proteins and 3 molecules of RNA (25S, 5.8S and 5S).

The protein resides in the cytoplasm. Required for the processing of the 20S rRNA-precursor to mature 18S rRNA in a late step of the maturation of 40S ribosomal subunits. Has a physiological role leading to 18S rRNA stability. The chain is Small ribosomal subunit protein eS21 (RPS21) from Candida glabrata (strain ATCC 2001 / BCRC 20586 / JCM 3761 / NBRC 0622 / NRRL Y-65 / CBS 138) (Yeast).